A 263-amino-acid polypeptide reads, in one-letter code: tRNA uridine(34) hydroxylase (263 aa).

The Rhodanese domain occupies 129–223; that stretch reads EGREVVTLDT…YFEETDGAFY (95 aa). Residue C183 is the Cysteine persulfide intermediate of the active site.

It belongs to the TrhO family.

It carries out the reaction uridine(34) in tRNA + AH2 + O2 = 5-hydroxyuridine(34) in tRNA + A + H2O. Functionally, catalyzes oxygen-dependent 5-hydroxyuridine (ho5U) modification at position 34 in tRNAs. The chain is tRNA uridine(34) hydroxylase from Delftia acidovorans (strain DSM 14801 / SPH-1).